Here is a 276-residue protein sequence, read N- to C-terminus: Phosducin-like protein 1 (276 aa).

Phosphoserine occurs at positions 18, 19, 20, and 42. A disordered region spans residues 18–74 (SSSEGEDNGDEGGDNKGASGKSRCSGLTIDTNPDATPAGGFRQQSSTNTGPKGVVKD). Positions 62-272 (SSTNTGPKGV…LIEHGIIVDR (211 aa)) constitute a Phosducin domain. The interval 153 to 276 (FGQVQQLTSH…GIIVDRALYN (124 aa)) is thioredoxin fold.

The protein belongs to the phosducin family. In terms of assembly, forms a complex with the beta and gamma subunits of the GTP-binding proteins. Interacts with the CCT chaperonin complex.

Functions as a co-chaperone for CCT in the assembly of heterotrimeric G protein complexes, facilitates the assembly of both Gbeta-Ggamma and RGS-Gbeta5 heterodimers. The polypeptide is Phosducin-like protein 1 (Drosophila melanogaster (Fruit fly)).